Here is a 234-residue protein sequence, read N- to C-terminus: tRNA (guanine-N(1)-)-methyltransferase (234 aa).

G113 contributes to the S-adenosyl-L-methionine binding site.

The protein belongs to the RNA methyltransferase TrmD family. Homodimer.

It localises to the cytoplasm. The enzyme catalyses guanosine(37) in tRNA + S-adenosyl-L-methionine = N(1)-methylguanosine(37) in tRNA + S-adenosyl-L-homocysteine + H(+). Functionally, specifically methylates guanosine-37 in various tRNAs. This is tRNA (guanine-N(1)-)-methyltransferase from Gluconobacter oxydans (strain 621H) (Gluconobacter suboxydans).